A 464-amino-acid polypeptide reads, in one-letter code: ERO1-like protein alpha (464 aa).

A signal peptide spans 1-23 (MGRAWGLLVGLLGVVWLLRLGHG). 8 disulfide bridges follow: C35-C48, C37-C46, C85-C387, C94-C99, C94-C130, C99-C104, C207-C237, and C390-C393. 3 positions are modified to phosphoserine: S106, S142, and S144. The FAD site is built by R186, T188, and W199. FAD-binding residues include S248 and H251. N276 is a glycosylation site (N-linked (GlcNAc...) asparagine). Positions 283 and 296 each coordinate FAD. Residue N380 is glycosylated (N-linked (GlcNAc...) asparagine).

This sequence belongs to the EROs family. In terms of assembly, predominantly monomer. May function both as a monomer and a homodimer. Interacts with PDILT. Interacts with ERP44; the interaction results in retention of ERO1A in the endoplasmic reticulum. FAD is required as a cofactor. In terms of processing, N-glycosylated. Post-translationally, the Cys-94/Cys-99 and Cys-390/Cys-393 disulfide bonds constitute the redox-active center. The Cys-94/Cys-99 disulfide bond may accept electron from P4HB and funnel them to the active site disulfide Cys-390/Cys-393. The regulatory Cys-99/Cys-104 disulfide bond stabilizes the other regulatory bond Cys-94/Cys-130. Phosphorylated on Ser-144 by FAM20C in the Golgi which increases its enzymatic activity. Phosphorylation is induced by lactation. It is also induced by hypoxia and reductive stress. Widely expressed (at protein level). In the mammary gland, expressed at higher levels in lactating mice than in virgin mice (at protein level).

The protein resides in the endoplasmic reticulum membrane. Its subcellular location is the golgi apparatus lumen. It localises to the secreted. The protein localises to the cell projection. It is found in the dendrite. With respect to regulation, enzyme activity is tightly regulated to prevent the accumulation of reactive oxygen species in the endoplasmic reticulum. Reversibly down-regulated by the formation of disulfide bonds between the active site Cys-94 and Cys-130, and between Cys-99 and Cys-104. Glutathione may be required to regulate its activity in the endoplasmic reticulum. Oxidoreductase involved in disulfide bond formation in the endoplasmic reticulum. Efficiently reoxidizes P4HB/PDI, the enzyme catalyzing protein disulfide formation, in order to allow P4HB to sustain additional rounds of disulfide formation. Following P4HB reoxidation, passes its electrons to molecular oxygen via FAD, leading to the production of reactive oxygen species (ROS) in the cell. Required for the proper folding of immunoglobulins. Plays an important role in ER stress-induced, CHOP-dependent apoptosis by activating the inositol 1,4,5-trisphosphate receptor IP3R1. This Mus musculus (Mouse) protein is ERO1-like protein alpha.